The primary structure comprises 217 residues: Transmembrane protein 253 (217 aa).

4 helical membrane passes run 33–53 (LVLA…AVSV), 62–82 (MATA…TVTL), 96–116 (MMIF…VEVM), and 138–158 (LSAE…LFLL). The tract at residues 187-217 (PGLENGPTVASTGANERVGQREQTRAALLPP) is disordered.

Its subcellular location is the membrane. The sequence is that of Transmembrane protein 253 (TMEM253) from Homo sapiens (Human).